We begin with the raw amino-acid sequence, 339 residues long: Anthranilate phosphoribosyltransferase (339 aa).

5-phospho-alpha-D-ribose 1-diphosphate is bound by residues Gly79, 82–83, Ser87, 89–92, 107–115, and Ser119; these read GD, NIST, and KHGNRSISS. Residue Gly79 participates in anthranilate binding. Mg(2+) is bound at residue Ser91. Asn110 provides a ligand contact to anthranilate. Arg165 contributes to the anthranilate binding site. Asp224 and Glu225 together coordinate Mg(2+).

Belongs to the anthranilate phosphoribosyltransferase family. In terms of assembly, homodimer. It depends on Mg(2+) as a cofactor.

The catalysed reaction is N-(5-phospho-beta-D-ribosyl)anthranilate + diphosphate = 5-phospho-alpha-D-ribose 1-diphosphate + anthranilate. The protein operates within amino-acid biosynthesis; L-tryptophan biosynthesis; L-tryptophan from chorismate: step 2/5. Functionally, catalyzes the transfer of the phosphoribosyl group of 5-phosphorylribose-1-pyrophosphate (PRPP) to anthranilate to yield N-(5'-phosphoribosyl)-anthranilate (PRA). The chain is Anthranilate phosphoribosyltransferase from Listeria monocytogenes serotype 4b (strain CLIP80459).